The sequence spans 623 residues: mRNA-capping enzyme (623 aa).

The TPase stretch occupies residues 13-224 (MGLPDRWLHC…IDNGRPSTSQ (212 aa)). The region spanning 44 to 196 (YDNQIAERRY…YDPTEDDKIL (153 aa)) is the Tyrosine-protein phosphatase domain. Catalysis depends on C136, which acts as the Phosphocysteine intermediate. A compositionally biased stretch (polar residues) spans 213 to 229 (TQIDNGRPSTSQQIPAT). The segment at 213 to 243 (TQIDNGRPSTSQQIPATNGNNNQNGNQLSGG) is disordered. Residues 230-239 (NGNNNQNGNQ) are compositionally biased toward low complexity. Residues 241 to 585 (SGGGDNSKLF…NPVTETYLIE (345 aa)) form a GTase region. The active-site N6-GMP-lysine intermediate is K311. GTP is bound by residues R316, R331, 357 to 359 (DTE), 477 to 479 (KWK), and 553 to 558 (RERTDK). Residues 603 to 623 (HHQIHQQQLHEGEPEARRQKL) form a disordered region. The segment covering 610-623 (QLHEGEPEARRQKL) has biased composition (basic and acidic residues).

It in the N-terminal section; belongs to the non-receptor class of the protein-tyrosine phosphatase family. This sequence in the C-terminal section; belongs to the eukaryotic GTase family.

It is found in the nucleus. It carries out the reaction a 5'-end triphospho-ribonucleoside in mRNA + H2O = a 5'-end diphospho-ribonucleoside in mRNA + phosphate + H(+). The enzyme catalyses a 5'-end diphospho-ribonucleoside in mRNA + GTP + H(+) = a 5'-end (5'-triphosphoguanosine)-ribonucleoside in mRNA + diphosphate. RNA triphosphatase activity is inhibited by magnesium. Bifunctional mRNA-capping enzyme exhibiting RNA 5'-triphosphate monophosphatase activity in the N-terminal part and mRNA guanylyltransferase activity in the C-terminal part. Catalyzes the first two steps of cap formation: by removing the gamma-phosphate from the 5'-triphosphate end of nascent mRNA to yield a diphosphate end, and by transferring the GMP moiety of GTP to the 5'-diphosphate terminus via a covalent enzyme-GMP reaction intermediate. This is mRNA-capping enzyme (cel-1) from Caenorhabditis elegans.